The following is a 3011-amino-acid chain: Chromodomain-helicase-DNA-binding protein 7 (3011 aa).

Disordered regions lie at residues 90 to 146 (ISNA…SMWG), 159 to 189 (PYQQQQQQPQPTQPPQAPSGPPGQGHPQHMQ), 202 to 422 (MQQH…GSAG), 502 to 806 (QQLP…VEKI), and 941 to 960 (PEMERVERPPADDWKKSESS). Residues 159-168 (PYQQQQQQPQ) show a composition bias toward low complexity. Positions 169–179 (PTQPPQAPSGP) are enriched in pro residues. Low complexity predominate over residues 203 to 215 (QQHGQPQQQRMNQ). Polar residues-rich tracts occupy residues 216–227 (FSQGQEGLNQGN), 241–258 (VPQQNPSMAPSLRHSVQQ), 291–347 (QTLN…NQSV), and 374–393 (GSLNQMNTQTMHPSQPQGTY). Residues 502-516 (QQLPSQQQSFQQQMP) show a composition bias toward low complexity. Composition is skewed to polar residues over residues 576–586 (TQVSGPNTQLV) and 630–641 (DSQNLSRNSVDC). Basic and acidic residues-rich tracts occupy residues 655–684 (KKEPKDPKEPKEKKEPKTPKVPKTPKEPKE) and 718–730 (KGKEGSENSDLDK). Positions 747–759 (QKRRSSRQVKRKR) are enriched in basic residues. Over residues 760–770 (YTEDLEFKISD) the composition is skewed to basic and acidic residues. Positions 783–795 (SPSNTSQSEQQES) are enriched in polar residues. Chromo domains are found at residues 801–868 (PVVE…GQNK) and 883–948 (VEID…RVER). One can recognise a Helicase ATP-binding domain in the interval 981–1155 (LFNWYNTRNC…FSLLHFLEPG (175 aa)). 994–1001 (DEMGLGKT) provides a ligand contact to ATP. A DEAH box motif is present at residues 1106–1109 (DEAH). The Helicase C-terminal domain maps to 1295-1465 (LIDKLLPKLK…LSKKEIEDLL (171 aa)). Disordered regions lie at residues 1577–1602 (FSDLESDSEEKPSTKPRRPQDKSQGY), 1836–1869 (GTDMLADGGDGGEFDREDEDPEYKPTRTPFKDEI), and 2136–2291 (GTGN…GFYM). The span at 1585–1597 (EEKPSTKPRRPQD) shows a compositional bias: basic and acidic residues. Acidic residues predominate over residues 1845–1856 (DGGEFDREDEDP). Residues 1857-1867 (EYKPTRTPFKD) show a composition bias toward basic and acidic residues. The span at 2136 to 2145 (GTGNANTVSS) shows a compositional bias: polar residues. Basic and acidic residues-rich tracts occupy residues 2166 to 2207 (QEEK…KQDC) and 2218 to 2238 (CELKDIEMSTDVDPKSISEKG). Residues 2239 to 2253 (SEEDEEEKLDDDDKS) show a composition bias toward acidic residues. Residues 2403–2433 (RRRRRKIEIEAERAAKRRNLMEMVAQLRESQ) are a coiled coil. Ser2561 carries the post-translational modification Phosphoserine. Disordered stretches follow at residues 2825–2900 (TTGN…LPTN) and 2946–3011 (GSNE…ENDE). Residues 2841 to 2851 (GASKAEEKKNE) are compositionally biased toward basic and acidic residues. The span at 2864–2877 (DTVSATDSANGSVS) shows a compositional bias: polar residues. Positions 2878–2893 (AATAATTATATTTTTT) are enriched in low complexity. The segment covering 2948 to 2964 (NEEKATDKTEGTAFKDE) has biased composition (basic and acidic residues). 2 stretches are compositionally biased toward acidic residues: residues 2965–2974 (ENLEGSDAEE) and 2984–3011 (ILEDEIAQGEELDSLDGGEEIENNENDE).

This sequence belongs to the SNF2/RAD54 helicase family. As to expression, expressed in the neural epithelium, otic placodes, optic placodes, branchial arches, and the olfactory placodes,.

The protein localises to the nucleus. It catalyses the reaction ATP + H2O = ADP + phosphate + H(+). Its function is as follows. ATP-dependent chromatin-remodeling factor, slides nucleosomes along DNA; nucleosome sliding requires ATP.Probable transcription regulator. Maybe involved in the in 45S precursor rRNA production. In Gallus gallus (Chicken), this protein is Chromodomain-helicase-DNA-binding protein 7 (CHD7).